We begin with the raw amino-acid sequence, 565 residues long: Formate--tetrahydrofolate ligase (565 aa).

67–74 (TPLGEGKT) lines the ATP pocket.

Belongs to the formate--tetrahydrofolate ligase family.

The catalysed reaction is (6S)-5,6,7,8-tetrahydrofolate + formate + ATP = (6R)-10-formyltetrahydrofolate + ADP + phosphate. It participates in one-carbon metabolism; tetrahydrofolate interconversion. In Saccharopolyspora erythraea (strain ATCC 11635 / DSM 40517 / JCM 4748 / NBRC 13426 / NCIMB 8594 / NRRL 2338), this protein is Formate--tetrahydrofolate ligase.